The following is a 671-amino-acid chain: UvrABC system protein B (671 aa).

The 388-residue stretch at 25 to 412 folds into the Helicase ATP-binding domain; that stretch reads EGIEAGLAHQ…AGRVVEQVVR (388 aa). 38–45 is a binding site for ATP; that stretch reads GVTGSGKT. Residues 91 to 114 carry the Beta-hairpin motif; that stretch reads YYDYYQPEAYVPSSDTFIEKDASI. Positions 429 to 582 constitute a Helicase C-terminal domain; that stretch reads QVDDLLSEIT…QIAFNLANGI (154 aa). The tract at residues 601–623 is disordered; the sequence is PGSRSKKRKGMAKAAEENARYEN. Positions 614–623 are enriched in basic and acidic residues; that stretch reads AAEENARYEN. Positions 632-667 constitute a UVR domain; it reads TKRIRQLEEKMYQLARDLEFEAAAQMRDEITKLRER.

The protein belongs to the UvrB family. In terms of assembly, forms a heterotetramer with UvrA during the search for lesions. Interacts with UvrC in an incision complex.

The protein resides in the cytoplasm. Its function is as follows. The UvrABC repair system catalyzes the recognition and processing of DNA lesions. A damage recognition complex composed of 2 UvrA and 2 UvrB subunits scans DNA for abnormalities. Upon binding of the UvrA(2)B(2) complex to a putative damaged site, the DNA wraps around one UvrB monomer. DNA wrap is dependent on ATP binding by UvrB and probably causes local melting of the DNA helix, facilitating insertion of UvrB beta-hairpin between the DNA strands. Then UvrB probes one DNA strand for the presence of a lesion. If a lesion is found the UvrA subunits dissociate and the UvrB-DNA preincision complex is formed. This complex is subsequently bound by UvrC and the second UvrB is released. If no lesion is found, the DNA wraps around the other UvrB subunit that will check the other stand for damage. The polypeptide is UvrABC system protein B (Pseudomonas fluorescens (strain ATCC BAA-477 / NRRL B-23932 / Pf-5)).